The sequence spans 145 residues: D-aminoacyl-tRNA deacylase (145 aa).

The Gly-cisPro motif, important for rejection of L-amino acids motif lies at 137–138 (GP).

It belongs to the DTD family. As to quaternary structure, homodimer.

Its subcellular location is the cytoplasm. It carries out the reaction glycyl-tRNA(Ala) + H2O = tRNA(Ala) + glycine + H(+). It catalyses the reaction a D-aminoacyl-tRNA + H2O = a tRNA + a D-alpha-amino acid + H(+). Its function is as follows. An aminoacyl-tRNA editing enzyme that deacylates mischarged D-aminoacyl-tRNAs. Also deacylates mischarged glycyl-tRNA(Ala), protecting cells against glycine mischarging by AlaRS. Acts via tRNA-based rather than protein-based catalysis; rejects L-amino acids rather than detecting D-amino acids in the active site. By recycling D-aminoacyl-tRNA to D-amino acids and free tRNA molecules, this enzyme counteracts the toxicity associated with the formation of D-aminoacyl-tRNA entities in vivo and helps enforce protein L-homochirality. The chain is D-aminoacyl-tRNA deacylase from Pseudomonas putida (strain GB-1).